The following is a 488-amino-acid chain: Glutamyl-tRNA(Gln) amidotransferase subunit A (488 aa).

Catalysis depends on charge relay system residues Lys77 and Ser152. Ser176 (acyl-ester intermediate) is an active-site residue.

Belongs to the amidase family. GatA subfamily. Heterotrimer of A, B and C subunits.

The enzyme catalyses L-glutamyl-tRNA(Gln) + L-glutamine + ATP + H2O = L-glutaminyl-tRNA(Gln) + L-glutamate + ADP + phosphate + H(+). In terms of biological role, allows the formation of correctly charged Gln-tRNA(Gln) through the transamidation of misacylated Glu-tRNA(Gln) in organisms which lack glutaminyl-tRNA synthetase. The reaction takes place in the presence of glutamine and ATP through an activated gamma-phospho-Glu-tRNA(Gln). The sequence is that of Glutamyl-tRNA(Gln) amidotransferase subunit A from Streptococcus pneumoniae (strain 70585).